We begin with the raw amino-acid sequence, 353 residues long: Photosystem II D2 protein (353 aa).

The residue at position 2 (threonine 2) is an N-acetylthreonine. Threonine 2 carries the post-translational modification Phosphothreonine. The chain crosses the membrane as a helical span at residues 41-61 (CAYFALGGWFTGTTFVTSWYT). A chlorophyll a-binding site is contributed by histidine 118. Residues 125 to 141 (GFMLRQFELARSVQLRP) form a helical membrane-spanning segment. 2 residues coordinate pheophytin a: glutamine 130 and asparagine 143. Residues 153 to 166 (VFVSVFLIYPLGQS) form a helical membrane-spanning segment. Histidine 198 is a chlorophyll a binding site. Residues 208-228 (AALLCAIHGATVENTLFEDGD) form a helical membrane-spanning segment. Residues histidine 215 and phenylalanine 262 each coordinate a plastoquinone. Fe cation is bound at residue histidine 215. Histidine 269 is a binding site for Fe cation. A helical transmembrane segment spans residues 279–295 (GLWMSAIGVVGLALNLR).

It belongs to the reaction center PufL/M/PsbA/D family. In terms of assembly, PSII is composed of 1 copy each of membrane proteins PsbA, PsbB, PsbC, PsbD, PsbE, PsbF, PsbH, PsbI, PsbJ, PsbK, PsbL, PsbM, PsbT, PsbX, PsbY, PsbZ, Psb30/Ycf12, at least 3 peripheral proteins of the oxygen-evolving complex and a large number of cofactors. It forms dimeric complexes. The D1/D2 heterodimer binds P680, chlorophylls that are the primary electron donor of PSII, and subsequent electron acceptors. It shares a non-heme iron and each subunit binds pheophytin, quinone, additional chlorophylls, carotenoids and lipids. There is also a Cl(-1) ion associated with D1 and D2, which is required for oxygen evolution. The PSII complex binds additional chlorophylls, carotenoids and specific lipids. serves as cofactor.

It localises to the plastid. Its subcellular location is the chloroplast thylakoid membrane. It carries out the reaction 2 a plastoquinone + 4 hnu + 2 H2O = 2 a plastoquinol + O2. Photosystem II (PSII) is a light-driven water:plastoquinone oxidoreductase that uses light energy to abstract electrons from H(2)O, generating O(2) and a proton gradient subsequently used for ATP formation. It consists of a core antenna complex that captures photons, and an electron transfer chain that converts photonic excitation into a charge separation. The D1/D2 (PsbA/PsbD) reaction center heterodimer binds P680, the primary electron donor of PSII as well as several subsequent electron acceptors. D2 is needed for assembly of a stable PSII complex. The polypeptide is Photosystem II D2 protein (Agrostis stolonifera (Creeping bentgrass)).